The following is a 470-amino-acid chain: Dynein axonemal assembly factor 11 (470 aa).

LRR repeat units lie at residues 20–43 (IFSL…DKWC), 44–65 (RELK…VSKL), 66–89 (KKLE…GCES), and 90–110 (LQKL…NSLQ). One can recognise an LRRCT domain in the interval 128–146 (YEGYRQYVVATLPQLKWLD). Residues 177-288 (LRKRAAEREK…NRSEEELKKK (112 aa)) adopt a coiled-coil conformation. Residues 182–265 (AEREKATNNL…SQYTPESRLE (84 aa)) are disordered. A compositionally biased stretch (basic and acidic residues) spans 194-213 (KQKEGRKAQEKKPGFDRRWY). In terms of domain architecture, CS spans 303-395 (VNESKLDFSL…TEMIQTKRAK (93 aa)). Residues 447–470 (HRNSARDTADSEDFIDNAEVPPLV) are disordered.

It belongs to the tilB family.

The protein resides in the cytoplasm. The protein localises to the cell projection. It localises to the cilium. It is found in the dynein axonemal particle. Its subcellular location is the flagellum. Its function is as follows. Involved in dynein arm assembly, is important for expression and transporting outer dynein arm (ODA) proteins from the cytoplasm to the cilia. In Xenopus tropicalis (Western clawed frog), this protein is Dynein axonemal assembly factor 11 (dnaaf11).